The following is a 123-amino-acid chain: UPF0102 protein VSAL_I2655 (123 aa).

This sequence belongs to the UPF0102 family.

In Aliivibrio salmonicida (strain LFI1238) (Vibrio salmonicida (strain LFI1238)), this protein is UPF0102 protein VSAL_I2655.